A 246-amino-acid chain; its full sequence is tRNA (guanine-N(1)-)-methyltransferase (246 aa).

Residues G112 and 131 to 136 (IGDYVL) contribute to the S-adenosyl-L-methionine site.

The protein belongs to the RNA methyltransferase TrmD family. As to quaternary structure, homodimer.

Its subcellular location is the cytoplasm. It carries out the reaction guanosine(37) in tRNA + S-adenosyl-L-methionine = N(1)-methylguanosine(37) in tRNA + S-adenosyl-L-homocysteine + H(+). Its function is as follows. Specifically methylates guanosine-37 in various tRNAs. In Thermosipho melanesiensis (strain DSM 12029 / CIP 104789 / BI429), this protein is tRNA (guanine-N(1)-)-methyltransferase.